A 388-amino-acid polypeptide reads, in one-letter code: Protein-glutamate methylesterase/protein-glutamine glutaminase 4 (388 aa).

Residues 4-121 form the Response regulatory domain; that stretch reads KVLVVDDSGF…SGDASKIKRL (118 aa). The residue at position 55 (Asp-55) is a 4-aspartylphosphate. The segment at 137 to 196 is disordered; the sequence is SGASAPASVPQPAKPAAPIPVREPPKPAAPVTRPAEPRAKAPPAKPEPKPEVKAAKSRRT. The span at 148-164 shows a compositional bias: pro residues; the sequence is PAKPAAPIPVREPPKPA. Positions 197–388 constitute a CheB-type methylesterase domain; sequence PRQDYKVVLI…FAPRLIDGVG (192 aa). Residues Ser-209, His-236, and Asp-332 contribute to the active site.

The protein belongs to the CheB family. Phosphorylated by CheA. Phosphorylation of the N-terminal regulatory domain activates the methylesterase activity.

The protein localises to the cytoplasm. It catalyses the reaction [protein]-L-glutamate 5-O-methyl ester + H2O = L-glutamyl-[protein] + methanol + H(+). It carries out the reaction L-glutaminyl-[protein] + H2O = L-glutamyl-[protein] + NH4(+). Its function is as follows. Involved in chemotaxis. Part of a chemotaxis signal transduction system that modulates chemotaxis in response to various stimuli. Catalyzes the demethylation of specific methylglutamate residues introduced into the chemoreceptors (methyl-accepting chemotaxis proteins or MCP) by CheR. Also mediates the irreversible deamidation of specific glutamine residues to glutamic acid. The protein is Protein-glutamate methylesterase/protein-glutamine glutaminase 4 of Hahella chejuensis (strain KCTC 2396).